Reading from the N-terminus, the 328-residue chain is Cytochrome f (328 aa).

Positions 1-44 are cleaved as a signal peptide; the sequence is MRTFNFLSFPQVHRQALVKAVLVAIATVSLLLTSDVINPQSAQA. Residues Tyr45, Cys66, Cys69, and His70 each coordinate heme. A helical transmembrane segment spans residues 294–314; the sequence is IKGLVLFLGGIMLCQILLVIK.

It belongs to the cytochrome f family. In terms of assembly, the 4 large subunits of the cytochrome b6-f complex are cytochrome b6, subunit IV (17 kDa polypeptide, PetD), cytochrome f and the Rieske protein, while the 4 small subunits are PetG, PetL, PetM and PetN. The complex functions as a dimer. The cofactor is heme.

The protein localises to the cellular thylakoid membrane. Component of the cytochrome b6-f complex, which mediates electron transfer between photosystem II (PSII) and photosystem I (PSI), cyclic electron flow around PSI, and state transitions. The polypeptide is Cytochrome f (Microcystis aeruginosa (strain NIES-843 / IAM M-2473)).